Here is an 889-residue protein sequence, read N- to C-terminus: A disintegrin and metalloproteinase with thrombospondin motifs 8 (889 aa).

The N-terminal stretch at 1 to 26 (MLPAPAAPRWPPLLLLLLLLLPLARG) is a signal peptide. A propeptide spanning residues 27 to 213 (APARPAAGGQ…PLGATSRTKR (187 aa)) is cleaved from the precursor. Positions 138-210 (QGAGGSLAQP…PPPPLGATSR (73 aa)) are disordered. Over residues 173-183 (EGQRQERGDHQ) the composition is skewed to basic and acidic residues. Acidic residues predominate over residues 184–197 (EDSEEESQEEEAEG). The 211-residue stretch at 219–429 (RFVETLLVAD…GHGDCLLDAP (211 aa)) folds into the Peptidase M12B domain. 11 disulfide bridges follow: C294/C347, C323/C329, C341/C424, C379/C408, C452/C477, C463/C486, C472/C507, C501/C512, C538/C575, C542/C580, and C553/C565. Residue N344 is glycosylated (N-linked (GlcNAc...) asparagine). Residue H363 participates in Zn(2+) binding. E364 is an active-site residue. Residues H367 and H373 each contribute to the Zn(2+) site. 3 N-linked (GlcNAc...) asparagine glycosylation sites follow: N400, N465, and N490. A Disintegrin domain is found at 438–525 (GLPGRMALYQ…EEVERPKPVA (88 aa)). In terms of domain architecture, TSP type-1 1 spans 526 to 581 (DGGWAPWGPWGECSRTCGGGVQFSHRECKDPEPQNGGRYCLGRRAKYQSCHTEECP). N599 is a glycosylation site (N-linked (GlcNAc...) asparagine). Positions 690–831 (RKVSGSLTPT…RATTNIIQPL (142 aa)) are spacer. One can recognise a TSP type-1 2 domain in the interval 833-888 (HAQWVLGDWSECSSTCGAGWQRRTVECRDPSGQASATCNKALKPEDAKPCESQLCP).

Requires Zn(2+) as cofactor. In terms of processing, the precursor is cleaved by a furin endopeptidase. Post-translationally, glycosylated. Can be O-fucosylated by POFUT2 on a serine or a threonine residue found within the consensus sequence C1-X(2)-(S/T)-C2-G of the TSP type-1 repeat domains where C1 and C2 are the first and second cysteine residue of the repeat, respectively. Fucosylated repeats can then be further glycosylated by the addition of a beta-1,3-glucose residue by the glucosyltransferase, B3GALTL. Fucosylation mediates the efficient secretion of ADAMTS family members. Can also be C-glycosylated with one or two mannose molecules on tryptophan residues within the consensus sequence W-X-X-W of the TPRs, and N-glycosylated. These other glycosylations can also facilitate secretion. As to expression, highly expressed in adult and fetal lung, lower expression in brain, placenta, heart, stomach and fetal brain and kidney.

It localises to the secreted. The protein localises to the extracellular space. Its subcellular location is the extracellular matrix. Functionally, has anti-angiogenic properties. This chain is A disintegrin and metalloproteinase with thrombospondin motifs 8 (ADAMTS8), found in Homo sapiens (Human).